The sequence spans 407 residues: Arginine deiminase (407 aa).

The active-site Amidino-cysteine intermediate is the C397.

Belongs to the arginine deiminase family.

Its subcellular location is the cytoplasm. The catalysed reaction is L-arginine + H2O = L-citrulline + NH4(+). The protein operates within amino-acid degradation; L-arginine degradation via ADI pathway; carbamoyl phosphate from L-arginine: step 1/2. This is Arginine deiminase from Listeria welshimeri serovar 6b (strain ATCC 35897 / DSM 20650 / CCUG 15529 / CIP 8149 / NCTC 11857 / SLCC 5334 / V8).